Consider the following 479-residue polypeptide: Sulfate adenylyltransferase subunit 1 (479 aa).

In terms of domain architecture, tr-type G spans 25–239 (KSLLRFLTCG…EVLETVDIQR (215 aa)). The segment at 34–41 (GSVDDGKS) is G1. 34–41 (GSVDDGKS) serves as a coordination point for GTP. Residues 92–96 (GITID) form a G2 region. A G3 region spans residues 113–116 (DTPG). Residues 113–117 (DTPGH) and 168–171 (NKMD) each bind GTP. Residues 168–171 (NKMD) form a G4 region. The interval 206–208 (SAL) is G5.

Belongs to the TRAFAC class translation factor GTPase superfamily. Classic translation factor GTPase family. CysN/NodQ subfamily. Heterodimer composed of CysD, the smaller subunit, and CysN.

It carries out the reaction sulfate + ATP + H(+) = adenosine 5'-phosphosulfate + diphosphate. It functions in the pathway sulfur metabolism; hydrogen sulfide biosynthesis; sulfite from sulfate: step 1/3. Functionally, with CysD forms the ATP sulfurylase (ATPS) that catalyzes the adenylation of sulfate producing adenosine 5'-phosphosulfate (APS) and diphosphate, the first enzymatic step in sulfur assimilation pathway. APS synthesis involves the formation of a high-energy phosphoric-sulfuric acid anhydride bond driven by GTP hydrolysis by CysN coupled to ATP hydrolysis by CysD. The polypeptide is Sulfate adenylyltransferase subunit 1 (Salmonella heidelberg (strain SL476)).